Consider the following 254-residue polypeptide: 5'-nucleotidase SurE (254 aa).

Asp-8, Asp-9, Ser-39, and Asn-91 together coordinate a divalent metal cation.

The protein belongs to the SurE nucleotidase family. It depends on a divalent metal cation as a cofactor.

It localises to the cytoplasm. The enzyme catalyses a ribonucleoside 5'-phosphate + H2O = a ribonucleoside + phosphate. Nucleotidase that shows phosphatase activity on nucleoside 5'-monophosphates. The chain is 5'-nucleotidase SurE from Methylibium petroleiphilum (strain ATCC BAA-1232 / LMG 22953 / PM1).